We begin with the raw amino-acid sequence, 371 residues long: Transposase for insertion sequence element IS421 (371 aa).

The protein belongs to the transposase 11 family.

Involved in the transposition of the insertion sequence IS421. The polypeptide is Transposase for insertion sequence element IS421 (Escherichia coli).